The sequence spans 529 residues: Peptide chain release factor 3 (529 aa).

A tr-type G domain is found at 11–280 (AKRRTFAIIS…GLVKWAPAPM (270 aa)). GTP-binding positions include 20–27 (SHPDAGKT), 88–92 (DTPGH), and 142–145 (NKLD).

It belongs to the TRAFAC class translation factor GTPase superfamily. Classic translation factor GTPase family. PrfC subfamily.

It is found in the cytoplasm. Increases the formation of ribosomal termination complexes and stimulates activities of RF-1 and RF-2. It binds guanine nucleotides and has strong preference for UGA stop codons. It may interact directly with the ribosome. The stimulation of RF-1 and RF-2 is significantly reduced by GTP and GDP, but not by GMP. In Photorhabdus laumondii subsp. laumondii (strain DSM 15139 / CIP 105565 / TT01) (Photorhabdus luminescens subsp. laumondii), this protein is Peptide chain release factor 3.